Consider the following 126-residue polypeptide: Protein translocase subunit SecE (126 aa).

3 helical membrane-spanning segments follow: residues 18–38 (LKWVATFVLLVAAVVGNYLYG), 40–60 (LSVVARAAGVIVLIAAALGVA), and 97–117 (IVLAVSIVMALALWGIDGIMV).

This sequence belongs to the SecE/SEC61-gamma family. Component of the Sec protein translocase complex. Heterotrimer consisting of SecY, SecE and SecG subunits. The heterotrimers can form oligomers, although 1 heterotrimer is thought to be able to translocate proteins. Interacts with the ribosome. Interacts with SecDF, and other proteins may be involved. Interacts with SecA.

The protein localises to the cell inner membrane. Functionally, essential subunit of the Sec protein translocation channel SecYEG. Clamps together the 2 halves of SecY. May contact the channel plug during translocation. The chain is Protein translocase subunit SecE from Vibrio cholerae serotype O1 (strain ATCC 39315 / El Tor Inaba N16961).